A 1620-amino-acid chain; its full sequence is MSETQEQEASGNGEPDLPTTIRVTLKTLDDREATVTIGLQDTIQSLIDLGRREMNIQSGFQRVIAGGRVLNSTQTVQAAGISDGQTVHLVDRGPSGENDRPNVMPDRVAGPRIINAIPGLPPPGFIFQSPAFARMIPGNVEIPTPPSQTQHTVVHPIRVPGSIAGTPVLTSRVSEDCVLQKAVPYRGTSNSPNRPQAASQTVTFPSEPNVIQWTVNIADDLIFRPREHFEQVVRETINNISFLSDSTRLGVSMKWNQNCTSLSVELPPVSPHIPSPALEKLDFLCLWTDHLSRFIDKLEEHDGLVAATRHVLEMVKTRQFDQNLSQQARNQRVEALDEIVKHLEYQWAELSHMKDFERIRFRKNQTEEYRALKIQEYPETPRNPHFYMRHALDIDVIGVMREFRKQQRRFTRLEDLLDDLNEVGAVKFIRDHITTEVDYRYQALSMFYCYIQRMRHQISHMTHLTADLDVSFITPSFPQRILPQYAFQSSDEQPLTIPVTHIFEPPRMLSDVGGRYNGDYPYLAYHPPSVHMEVVLQEPRRIAEPRPQILARPTPQQFVLTQEMNQGGSINLMAATDPISGLSLQDVLRAQQEQVENLFAQQPGIEGGRVRVTARPGRRFVATTGDAPSVPVETLPPPGSDQQPGTSRRFTTHRFNVQPDARGAETETLAPFPVAIEPNELQRIAKNIASRYRAEALQRIASSLTTRFNNESWDTRIQNMPLCTLRECVAIALEMLTSAGNTVNESKDLMLALVRDEEVLVRAIAECIKSLFGRGEFPTHVARLIMPTNQTASSRNDYESVDGVEESQSDEFDSMIVRVPSDISQPQSGDLRAIRERRQNRRQFLENRGRIPSTSSAPSTSENPPGPSFNSEDAADIRAGRLPLGTRPNRRTVRETVHPAAAARAESPNHISLTFTATTHTFAPAGFPLMMASSNVPSTSAGPPGWPIRQVVSPTPTTRGLFEFDLSGSSDQPARSTPSPPAPTPRTTSAPATVQSSPTRQESMDIDSPNVQNPGHVESPAAIAARQAARVARARIDHLAATFNGDLADSRRQSPFVTPGPTTPLNDPRRRTVRVTQHVKPMVAIDPFMNCTNRHCEINRLATPTHMADGDRFTLQSLQPDQEFEARIQALVPSIERRPIQIHHEDEDYNYSIRRTQSGLLSFRNLEDFRPFVKTAIRSLLAHCIDADTLFTMNMNNISGYQAANHTELLRMVKEHISRVPGSRATRNASQNTTSVNQSTETSPREQMNRSPVQEAADPRLAFSPFPPGINLEQEVLIPGQIASLLTYLVDYMESSSNPRPPGIFGFLLELTYGRLTRHDFAQLARRTTATNVASEFEAQIRAHIRDNYLVGRTGLSNSELHGIAENLANNEQFFAIFMSQNDQLPTSFPFGYDRNDFAEVVWAFRQIEIALIKSFLTLSQLNLDSGNAVRFILQSVDSYLYRNLIMFYRMCDRDVERMKIQMKRISDYFATIRYESTDRPGINVFIDNWNRVMDYWSNRYTDFSEENFDQFLLKVRAGTDWNDIVLNESRQLLPTIASTSSQPSTSSSSLNTVSTNNPRKRNHDGSREDNDDCVDVVAPMMTSLSTSSPLTSQSSSSGTRTSSGSSGPSTSSTTTNNIQ.

One can recognise a Ubiquitin-like domain in the interval 21-96 (IRVTLKTLDD…VHLVDRGPSG (76 aa)). 6 disordered regions span residues 621–648 (VATT…GTSR), 791–810 (TASS…SQSD), 842–874 (RQFL…SEDA), 950–1016 (QVVS…NPGH), 1219–1260 (RVPG…ADPR), and 1537–1620 (IAST…NNIQ). Residues 799–810 (ESVDGVEESQSD) show a composition bias toward acidic residues. A compositionally biased stretch (polar residues) spans 852 to 871 (PSTSSAPSTSENPPGPSFNS). Residues 1225 to 1242 (ATRNASQNTTSVNQSTET) show a composition bias toward polar residues. Low complexity-rich tracts occupy residues 1537–1556 (IAST…TVST) and 1583–1620 (TSLS…NNIQ).

This is an uncharacterized protein from Caenorhabditis elegans.